The following is a 316-amino-acid chain: Large ribosomal subunit protein uL10 (316 aa).

The disordered stretch occupies residues 289 to 316 (AAAAAPAKEAPKEESEESDEDMGFGLFD).

This sequence belongs to the universal ribosomal protein uL10 family. P0 forms a pentameric complex by interaction with dimers of P1 and P2. Phosphorylated.

It is found in the nucleus. It localises to the cytoplasm. Its function is as follows. Ribosomal protein P0 is the functional equivalent of E.coli protein L10. This is Large ribosomal subunit protein uL10 (RPLP0) from Gallus gallus (Chicken).